The sequence spans 2426 residues: Protein SON (2426 aa).

Position 2 is an N-acetylalanine (A2). K16 bears the N6-acetyllysine mark. Polar residues predominate over residues 24-42; it reads LSSGRNEGQLNGETNTPIE. Positions 24–56 are disordered; it reads LSSGRNEGQLNGETNTPIEGNQAGDAAASARSL. A Glycyl lysine isopeptide (Lys-Gly) (interchain with G-Cter in SUMO2) cross-link involves residue K64. The segment covering 77–88 has biased composition (basic and acidic residues); sequence LRYKPDLKEGSR. A disordered region spans residues 77–155; the sequence is LRYKPDLKEG…GNIDLESDSF (79 aa). Residue S94 is modified to Phosphoserine. Over residues 106–130 the composition is skewed to basic residues; it reads KKSKKHKKHKNKKKKKKKEKEKKYK. Residues 131–146 are compositionally biased toward basic and acidic residues; it reads RQPEESESKTKSHDDG. S142, S152, S154, S160, and S283 each carry phosphoserine. Position 288 is an N6-acetyllysine (K288). The segment at 305–328 is disordered; sequence TLVVSSETPTEVYPEPSTSTTMDF. T400 bears the Phosphothreonine mark. Residues 406-442 form a disordered region; the sequence is PGPSATPVPELPGPLSTPVPELPGPPATAVPELPGPS. A compositionally biased stretch (pro residues) spans 409–442; it reads SATPVPELPGPLSTPVPELPGPPATAVPELPGPS. Residues 726–895 form a 17 X 10 AA tandem repeats of L-A-[ST]-[NSG]-[TS]-MDSQM region; that stretch reads LASNTMDSQM…LASGTMDAQM (170 aa). The segment at 912-988 is 11 X 7 AA tandem repeats of [DR]-P-Y-R-[LI][AG][QHP]; sequence DPYRLAQDPY…IAPRPYRLAP (77 aa). At R950 the chain carries Omega-N-methylarginine. The residue at position 959 (T959) is a Phosphothreonine. At S998 the chain carries Phosphoserine. 14 repeat units span residues 1006-1011, 1014-1019, 1021-1026, 1030-1035, 1038-1043, 1046-1051, 1055-1060, 1063-1068, 1071-1076, 1080-1085, 1089-1094, 1100-1105, 1111-1116, and 1121-1126. The 14 X 6 AA repeats of [ED]-R-S-M-M-S stretch occupies residues 1006–1126; it reads ERSMMSSYER…SYTADRSMMS (121 aa). Position 1007 is an asymmetric dimethylarginine (R1007). Asymmetric dimethylarginine is present on R1022. Phosphoserine occurs at positions 1035 and 1043. Phosphoserine is present on residues S1060 and S1068. S1082 bears the Phosphoserine mark. The segment at 1144–1236 is disordered; sequence YMVPPLPPEE…PTDYSVSASD (93 aa). Residues 1147–1179 are 3 X 11 AA tandem repats of P-P-L-P-P-E-E-P-P-[TME]-[MTG]; the sequence is PPLPPEEPPTMPPLPPEEPPMTPPLPPEEPPEG. The span at 1147–1180 shows a compositional bias: pro residues; sequence PPLPPEEPPTMPPLPPEEPPMTPPLPPEEPPEGP. Polar residues predominate over residues 1186 to 1196; that stretch reads QSALTAENTWP. Residues 1198-1224 show a composition bias toward low complexity; the sequence is EVPSSPSEESVSQPEPPVSQSEISEPS. A 4 X 8 AA tandem repeats of V-L-E-SS-[AVT]-VT region spans residues 1359–1390; it reads VLESSAVTVLESSTVTVLESSTVTVLEPSVVT. Phosphoserine occurs at positions 1556 and 1651. Residues 1645–1722 are disordered; the sequence is TSPSGGSEAD…KETLPDSGFS (78 aa). Basic and acidic residues predominate over residues 1677–1689; the sequence is KDTEEPLPVKESD. S1697, S1701, S1747, S1759, S1766, S1769, S1782, and S1783 each carry phosphoserine. The disordered stretch occupies residues 1754 to 2054; it reads GPLLASDVGR…RSPKRLTDLD (301 aa). Composition is skewed to basic and acidic residues over residues 1790–1801, 1809–1822, and 1830–1845; these read YEIFVKVKDTHE, RDKG…DSSL, and KSSE…ESRS. Composition is skewed to basic residues over residues 1846-1909 and 1917-1948; these read RARK…RKRS and TVRA…RRRS. A run of 9 repeats spans residues 1925 to 1931, 1934 to 1952, 1953 to 1959, 1960 to 1966, 1967 to 1973, 1974 to 1980, 1981 to 1987, 1988 to 1994, and 1995 to 2013. The interval 1925–1994 is 7 X 7 AA repeats of P-S-R-R-S-R-[TS]; that stretch reads PSRRSRSHTP…SRTPSRRSRT (70 aa). Residues 1934 to 2013 form a 2 X 19 AA repeats of P-S-R-R-R-R-S-R-S-V-V-R-R-R-S-F-S-I-S region; sequence PSRRRRSRSV…VVRRRSFSIS (80 aa). 3 positions are modified to phosphoserine: S1948, S1950, and S1952. The span at 1955–2009 shows a compositional bias: basic residues; the sequence is RRSRTPSRRSRTPSRRSRTPSRRSRTPSRRSRTPSRRSRTPSRRRRSRSVVRRRS. S2009, S2011, S2013, S2029, and S2031 each carry phosphoserine. The interval 2013–2039 is 3 X tandem repeats of [ST]-P-[VLI]-R-[RL]-[RK]-[RF]-S-R; the sequence is SPVRLRRSRTPLRRRFSRSPIRRKRSR. Residues 2016-2038 show a composition bias toward basic residues; it reads RLRRSRTPLRRRFSRSPIRRKRS. Over residues 2039 to 2054 the composition is skewed to basic and acidic residues; sequence RSSERGRSPKRLTDLD. K2055 is modified (N6-acetyllysine; alternate). A Glycyl lysine isopeptide (Lys-Gly) (interchain with G-Cter in SUMO2); alternate cross-link involves residue K2055. K2092 participates in a covalent cross-link: Glycyl lysine isopeptide (Lys-Gly) (interchain with G-Cter in SUMO2). At S2129 the chain carries Phosphoserine. Residue K2149 forms a Glycyl lysine isopeptide (Lys-Gly) (interchain with G-Cter in SUMO2) linkage. T2163 bears the Phosphothreonine mark. The interval 2200-2220 is disordered; it reads KNGEENKDDDNVFSSNLPSEP. Position 2238 is a phosphoserine (S2238). In terms of domain architecture, G-patch spans 2305-2351; the sequence is TGGMGAVLMRKMGWREGEGLGKNKEGNKEPILVDFKTDRKGLVAVGE. One can recognise a DRBM domain in the interval 2371–2426; it reads HPVSALMEICNKRRWQPPEFLLVHDSGPDHRKHFLFRVLRNGALTRPNCMFFLNRY.

Interacts with SRSF2. Associates with the spliceosome. Interacts with the AML1-MTG8 (AML1-ETO) fusion protein, possibly leading to trigger signals inhibiting leukemogenesis. Interacts with USH1G. As to expression, widely expressed, with the higher expression seen in leukocyte and heart.

It is found in the nucleus speckle. Functionally, RNA-binding protein that acts as a mRNA splicing cofactor by promoting efficient splicing of transcripts that possess weak splice sites. Specifically promotes splicing of many cell-cycle and DNA-repair transcripts that possess weak splice sites, such as TUBG1, KATNB1, TUBGCP2, AURKB, PCNT, AKT1, RAD23A, and FANCG. Probably acts by facilitating the interaction between Serine/arginine-rich proteins such as SRSF2 and the RNA polymerase II. Also binds to DNA; binds to the consensus DNA sequence: 5'-GA[GT]AN[CG][AG]CC-3'. May indirectly repress hepatitis B virus (HBV) core promoter activity and transcription of HBV genes and production of HBV virions. Essential for correct RNA splicing of multiple genes critical for brain development, neuronal migration and metabolism, including TUBG1, FLNA, PNKP, WDR62, PSMD3, PCK2, PFKL, IDH2, and ACY1. The sequence is that of Protein SON (SON) from Homo sapiens (Human).